A 482-amino-acid polypeptide reads, in one-letter code: C3a anaphylatoxin chemotactic receptor (482 aa).

Topologically, residues 1–23 (MASFSAETNSTDLLSQPWNEPPV) are extracellular. Asparagine 9 carries N-linked (GlcNAc...) asparagine glycosylation. Residues 24–46 (ILSMVILSLTFLLGLPGNGLVLW) traverse the membrane as a helical segment. Residues 47–57 (VAGLKMQRTVN) are Cytoplasmic-facing. The chain crosses the membrane as a helical span at residues 58–80 (TVWFLHLTLADLLCCLSLPFSLA). The Extracellular portion of the chain corresponds to 81–96 (HLALQGQWPYGRFLCE). A disulfide bond links cysteine 95 and cysteine 172. Residues 97 to 118 (LIPSIIVLNMFASVFLLTAISL) traverse the membrane as a helical segment. Residues 119–139 (DRCLVVFKPIWCQNHRNVGTA) lie on the Cytoplasmic side of the membrane. The chain crosses the membrane as a helical span at residues 140–160 (CSICGCIWVVAFVMCIPVFVY). The Extracellular segment spans residues 161–340 (REIFTADNHN…TPLVAITITR (180 aa)). Sulfotyrosine occurs at positions 174 and 184. Asparagine 194 is a glycosylation site (N-linked (GlcNAc...) asparagine). Tyrosine 318 carries the sulfotyrosine modification. The helical transmembrane segment at 341–360 (LVVGFLLPSVIMIACYSFIV) threads the bilayer. The Cytoplasmic portion of the chain corresponds to 361–377 (FRMQRGRFAKSQSKTFR). Residues 378–400 (VAVVVVAVFLVCWTPYHIFGVLS) form a helical membrane-spanning segment. Residues 401–417 (LLIDPESPLGKTLMSWD) lie on the Extracellular side of the membrane. The chain crosses the membrane as a helical span at residues 418–438 (HVSIALASANSCFNPFLYALL). Over 439 to 482 (GKDFRKKARQSIQGILEAAFSEELTRSTHCNSNNVFSERNSTTV) the chain is Cytoplasmic. Serine 459 carries the post-translational modification Phosphoserine. Threonine 463 carries the post-translational modification Phosphothreonine.

Belongs to the G-protein coupled receptor 1 family. Interacts with VGF-derived peptide TLQP-21. Post-translationally, among the sulfation sites Tyr-174 is essential for binding of C3a anaphylatoxin.

The protein resides in the cell membrane. Its function is as follows. Receptor for the chemotactic and inflammatory peptide anaphylatoxin C3a. This receptor stimulates chemotaxis, granule enzyme release and superoxide anion production. In Pongo abelii (Sumatran orangutan), this protein is C3a anaphylatoxin chemotactic receptor (C3AR1).